The chain runs to 163 residues: Sorting nexin-3 (163 aa).

Residues 39-162 (VEVRDPRTHF…VRFLQDEVFN (124 aa)) enclose the PX domain. A 1,2-diacyl-sn-glycero-3-phospho-(1D-myo-inositol-3-phosphate) contacts are provided by arginine 82, serine 84, lysine 113, arginine 119, and arginine 128.

The protein belongs to the sorting nexin family.

Its subcellular location is the cytoplasm. The protein localises to the golgi apparatus membrane. It localises to the prevacuolar compartment membrane. Functionally, required for retention of late Golgi membrane proteins. Component of the retrieval machinery that functions by direct interaction with the cytosolic tails of certain TGN membrane proteins during the sorting/budding process at the prevacuolar compartment. Binds phosphatidylinositol 3-phosphate (PtdIns(P3)). The chain is Sorting nexin-3 (SNX3) from Eremothecium gossypii (strain ATCC 10895 / CBS 109.51 / FGSC 9923 / NRRL Y-1056) (Yeast).